Consider the following 192-residue polypeptide: Small ribosomal subunit protein uS5 (192 aa).

The tract at residues 1 to 21 (MAAERERGGRERGGRDRDERD) is disordered. In terms of domain architecture, S5 DRBM spans 24–87 (FVDKLVHINR…DSAKRNLTRV (64 aa)).

Belongs to the universal ribosomal protein uS5 family. Part of the 30S ribosomal subunit. Contacts proteins S4 and S8.

Functionally, with S4 and S12 plays an important role in translational accuracy. Located at the back of the 30S subunit body where it stabilizes the conformation of the head with respect to the body. This Afipia carboxidovorans (strain ATCC 49405 / DSM 1227 / KCTC 32145 / OM5) (Oligotropha carboxidovorans) protein is Small ribosomal subunit protein uS5.